A 401-amino-acid chain; its full sequence is Argininosuccinate synthase (401 aa).

Residues 7–15 and alanine 34 contribute to the ATP site; that span reads AYSGGLDTS. L-citrulline is bound by residues tyrosine 85 and serine 90. Glycine 115 contacts ATP. Residues threonine 117, asparagine 121, and aspartate 122 each contribute to the L-aspartate site. Asparagine 121 lines the L-citrulline pocket. L-citrulline contacts are provided by arginine 125, serine 174, serine 183, glutamate 259, and tyrosine 271.

It belongs to the argininosuccinate synthase family. Type 1 subfamily. As to quaternary structure, homotetramer.

The protein localises to the cytoplasm. It carries out the reaction L-citrulline + L-aspartate + ATP = 2-(N(omega)-L-arginino)succinate + AMP + diphosphate + H(+). Its pathway is amino-acid biosynthesis; L-arginine biosynthesis; L-arginine from L-ornithine and carbamoyl phosphate: step 2/3. This chain is Argininosuccinate synthase, found in Desulfitobacterium hafniense (strain DSM 10664 / DCB-2).